We begin with the raw amino-acid sequence, 321 residues long: Ornithine carbamoyltransferase (321 aa).

Residues 53-56, Q80, R104, and 131-134 contribute to the carbamoyl phosphate site; these read STRT and HPCQ. L-ornithine contacts are provided by residues N166, D230, and 234–235; that span reads SM. Carbamoyl phosphate-binding positions include 270–271 and R298; that span reads CL.

This sequence belongs to the aspartate/ornithine carbamoyltransferase superfamily. OTCase family.

It is found in the cytoplasm. It catalyses the reaction carbamoyl phosphate + L-ornithine = L-citrulline + phosphate + H(+). It participates in amino-acid degradation; L-arginine degradation via ADI pathway; carbamoyl phosphate from L-arginine: step 2/2. Reversibly catalyzes the transfer of the carbamoyl group from carbamoyl phosphate (CP) to the N(epsilon) atom of ornithine (ORN) to produce L-citrulline. The sequence is that of Ornithine carbamoyltransferase from Bifidobacterium longum subsp. infantis (strain ATCC 15697 / DSM 20088 / JCM 1222 / NCTC 11817 / S12).